Reading from the N-terminus, the 186-residue chain is Ribosome-recycling factor (186 aa).

This sequence belongs to the RRF family.

It localises to the cytoplasm. Responsible for the release of ribosomes from messenger RNA at the termination of protein biosynthesis. May increase the efficiency of translation by recycling ribosomes from one round of translation to another. This is Ribosome-recycling factor from Rickettsia akari (strain Hartford).